We begin with the raw amino-acid sequence, 225 residues long: Dimerizing cyclase tstC (225 aa).

The first 19 residues, 1–19, serve as a signal peptide directing secretion; the sequence is MRLSTLSSLLLGSSSIVFA. N-linked (GlcNAc...) asparagine glycosylation is found at Asn146, Asn195, and Asn217.

The protein belongs to the dimerizing cyclase tstC family.

It catalyses the reaction 2 [4-(deca-1,8-diyl)-2,5-dioxo-2,5-dihydro-3-furanyl]acetate + H(+) = 2-[(1R,8S,14R,15R)-11-hydroxy-14,15-bis[(6E)-oct-6-en-1-yl]-3,5,9-trioxo-4,10-dioxatetracyclo[9.4.0.0(2,6).0(8,12)]pentadeca-2(6),12-dien-8-yl]acetate + CO2. It functions in the pathway secondary metabolite biosynthesis. Functionally, dimerizing cyclase; part of the gene cluster that mediates the biosynthesis of the antihypercholesterolemic agents phomoidrides which are dimeric anhydrides. Within the pathway, tstC produces the bicyclo[4.3.1]deca-1,6-diene core of phomoidrides via the dimerization of the monomeric anhydrides leading to prephomoidride. The pathway begins with the highly reducing polyketide synthase tstA that catalyzes the formation of a C12-fatty acyl-ACP, starting from one acetate and 5 malonate units. The hydrolase tstM is involved in the release of the C12-fatty acyl chain from phiA. The alkylcitrate synthase (ACS) tstJ and the alkylcitrate dehydratase (ACDH) tstI then give rise to decarboxylated monomeric anhydrides by coupling the C12-fatty acyl chain with oxalacetic acid. The cyclase tstC is responsible for the dimerization of the monomeric anhydrides which leads to the production of prephomoidride that contains the characteristic bicyclo[4.3.1]deca-1,6-diene system of phomoidrides. Iterative oxidation catalyzed by the alpha-ketoglutarate-dependent dioxygenase tstK produced then phomoidride A. Finally, the methyltransferase tstE converts phomoidride A to phomoidride B via an acetalization reaction. The phosphatidylethanolamine-binding protein tstB and tstN are not essential for dimerization and their functions have still to be determined. The sequence is that of Dimerizing cyclase tstC from Talaromyces stipitatus (strain ATCC 10500 / CBS 375.48 / QM 6759 / NRRL 1006) (Penicillium stipitatum).